A 137-amino-acid chain; its full sequence is uncharacterized protein (137 aa).

In terms of domain architecture, Ubiquitin-like spans 58-135 (VHVVAKTVRP…EVNLQMFLMN (78 aa)).

Its subcellular location is the cytoplasm. It localises to the nucleus. This is an uncharacterized protein from Schizosaccharomyces pombe (strain 972 / ATCC 24843) (Fission yeast).